Here is a 1247-residue protein sequence, read N- to C-terminus: Nidogen-1 (1247 aa).

Residues M1 to C28 form the signal peptide. The NIDO domain occupies P106 to P268. 2 positions are modified to sulfotyrosine: Y289 and Y296. The EGF-like 1 domain occupies S386 to V426. 19 cysteine pairs are disulfide-bonded: C390-C403, C397-C412, C411-C618, C414-C425, C672-C685, C679-C695, C697-C708, C714-C727, C721-C736, C738-C750, C762-C777, C769-C787, C789-C800, C806-C817, C811-C826, C828-C839, C849-C878, C889-C896, and C898-C919. Residues S430–A667 enclose the Nidogen G2 beta-barrel domain. Positions L668–Y709 constitute an EGF-like 2 domain. Residues R702–D704 carry the Cell attachment site motif. The EGF-like 3; calcium-binding domain occupies D710–V751. Positions P758 to Q801 constitute an EGF-like 4 domain. In terms of domain architecture, EGF-like 5; calcium-binding spans D802–V840. The Thyroglobulin type-1 domain maps to K846–C919. O-linked (GalNAc...) threonine glycans are attached at residues T922 and T935. LDL-receptor class B repeat units lie at residues K990–G1032, R1033–R1075, G1076–S1120, and S1121–N1162. An EGF-like 6 domain is found at G1208–I1244. Cystine bridges form between C1212–C1223, C1219–C1232, and C1234–C1243.

Interacts with FBLN1. Interacts with LGALS3BP. Interacts with PLXDC1. Interacts with SVEP1. Post-translationally, N- and O-glycosylated.

The protein resides in the secreted. It localises to the extracellular space. Its subcellular location is the extracellular matrix. The protein localises to the basement membrane. In terms of biological role, sulfated glycoprotein widely distributed in basement membranes and tightly associated with laminin. Also binds to collagen IV and perlecan. It probably has a role in cell-extracellular matrix interactions. The sequence is that of Nidogen-1 (NID1) from Homo sapiens (Human).